The sequence spans 637 residues: Galactofuranosyltransferase GlfT2 (637 aa).

UDP-alpha-D-galactofuranose-binding residues include Arg171, Gln200, Asn229, and Asp256. Asp256 and Asp258 together coordinate Mn(2+). Residue Asp372 is the Proton acceptor of the active site. Residue His396 participates in Mn(2+) binding.

The protein belongs to the glycosyltransferase 2 family. As to quaternary structure, homotetramer. The cofactor is Mn(2+). Requires Mg(2+) as cofactor.

Its subcellular location is the cell membrane. It catalyses the reaction beta-D-galactofuranosyl-(1-&gt;5)-beta-D-galactofuranosyl-(1-&gt;4)-alpha-L-rhamnosyl-(1-&gt;3)-N-acetyl-alpha-D-glucosaminyl-diphospho-trans,octa-cis-decaprenol + 28 UDP-alpha-D-galactofuranose = [beta-D-galactofuranosyl-(1-&gt;5)-beta-D-galactofuranosyl-(1-&gt;6)]14-beta-D-galactofuranosyl-(1-&gt;5)-beta-D-galactofuranosyl-(1-&gt;4)-alpha-L-rhamnopyranosyl-(1-&gt;3)-N-acetyl-alpha-D-glucosaminyl-diphospho-trans,octa-cis-decaprenol + 28 UDP + 28 H(+). It participates in cell wall biogenesis; cell wall polysaccharide biosynthesis. Involved in the galactan polymerization of the arabinogalactan (AG) region of the mycolylarabinogalactan-peptidoglycan (mAGP) complex, an essential component of the mycobacteria cell wall. Thus, successively transfers approximately 28 galactofuranosyl (Galf) residues from UDP-galactofuranose (UDP-Galf) onto the galactofuranosyl-galactofuranosyl-rhamnosyl-GlcNAc-diphospho-decaprenol (Galf-Galf-Rha-GlcNAc-PP-C50) acceptor produced by GlfT1, with alternating 1-&gt;5 and 1-&gt;6 links, forming a galactan domain with approximately 30 galactofuranosyl residues. This chain is Galactofuranosyltransferase GlfT2, found in Mycobacterium tuberculosis (strain ATCC 25618 / H37Rv).